The primary structure comprises 439 residues: Protein pop-1 (439 aa).

The tract at residues 1 to 38 (MMADEELGDEVKVFRRDEDADDDPMISGETSEQQLADD) is disordered. Over residues 9 to 18 (DEVKVFRRDE) the composition is skewed to basic and acidic residues. The involved in nuclear asymmetry stretch occupies residues 87-138 (SGLPIMFPMVVPQYLSPNPNINMMNMMTMRAAMAGAPLSPAFPAMFSPNPLF). Position 125 is a phosphoserine; by LIT1 (serine 125). Positions 199 to 269 (IKKPLNAFMW…SHKEKYPQWS (71 aa)) form a DNA-binding region, HMG box. A compositionally biased stretch (basic and acidic residues) spans 254–265 (AKKDRESHKEKY). Disordered regions lie at residues 254 to 298 (AKKD…NNDQ), 329 to 365 (RSGSELNDGHDGRGTSGGCSSSSESSSPNNNQPMPMN), and 385 to 439 (SAHL…VCTL). The segment covering 277–286 (NKKKPKRKRD) has biased composition (basic residues). Composition is skewed to low complexity over residues 346–365 (GCSSSSESSSPNNNQPMPMN) and 385–400 (SAHLASSHSTGSSGTS). The span at 409-420 (SESDVDEDEDID) shows a compositional bias: acidic residues. Polar residues predominate over residues 422–439 (TITQQTQEYIMQESVCTL).

The protein belongs to the TCF/LEF family. Interacts with hda-1. Interacts with bar-1. Interacts with par-5; the interaction is direct and is enhanced by lit-1-mediated pop-1 phosphorylation. The interaction also leads to the subsequent nuclear export of pop-1. Interacts (when phosphorylated on Ser-125) with lit-1; the interaction is dependent on the beta-catenin-lit-1 complex. Interacts with wrm-1. Post-translationally, phosphorylated on Ser-125 by lit-1 in the beta-catenin-lit-1 complex. Phosphorylation promotes the interaction of pop-1 and par-5 and the subsequent translocation of pop-1 from the nucleus to the cytoplasm.

It is found in the nucleus. It localises to the cytoplasm. Functionally, part of the Wnt signaling pathway essential for the specification of the mesodermal cell fate in early embryos. Required for asymmetrical division of somatic gonadal precursor descendants which initiate axis formation required to control organ shape. Similarly, involved in asymmetrical division of seam cells, a stem cell-like lineage. Represses expression of target genes via its interaction with hda-1 histone deacetylase. Required for specification of the M lineage-derived coelomocyte and sex myoblast fate. Regulates coelomocyte fate by positively regulating proliferation and ceh-34 and possibly eya-1 expression in M.dlpa and M.drpa precursors. The sequence is that of Protein pop-1 from Caenorhabditis briggsae.